A 446-amino-acid chain; its full sequence is UDP-N-acetylmuramoylalanine--D-glutamate ligase (446 aa).

115-121 (GTNGKTT) lines the ATP pocket.

Belongs to the MurCDEF family.

It localises to the cytoplasm. The enzyme catalyses UDP-N-acetyl-alpha-D-muramoyl-L-alanine + D-glutamate + ATP = UDP-N-acetyl-alpha-D-muramoyl-L-alanyl-D-glutamate + ADP + phosphate + H(+). The protein operates within cell wall biogenesis; peptidoglycan biosynthesis. Functionally, cell wall formation. Catalyzes the addition of glutamate to the nucleotide precursor UDP-N-acetylmuramoyl-L-alanine (UMA). This Pelobacter propionicus (strain DSM 2379 / NBRC 103807 / OttBd1) protein is UDP-N-acetylmuramoylalanine--D-glutamate ligase.